Consider the following 195-residue polypeptide: Shikimate kinase (195 aa).

Residue G26–T31 coordinates ATP. S30 is a Mg(2+) binding site. Substrate is bound by residues D48, R72, and G94. An ATP-binding site is contributed by R132. R151 provides a ligand contact to substrate.

The protein belongs to the shikimate kinase family. In terms of assembly, monomer. Mg(2+) is required as a cofactor.

The protein resides in the cytoplasm. It carries out the reaction shikimate + ATP = 3-phosphoshikimate + ADP + H(+). It participates in metabolic intermediate biosynthesis; chorismate biosynthesis; chorismate from D-erythrose 4-phosphate and phosphoenolpyruvate: step 5/7. In terms of biological role, catalyzes the specific phosphorylation of the 3-hydroxyl group of shikimic acid using ATP as a cosubstrate. The sequence is that of Shikimate kinase from Synechococcus sp. (strain RCC307).